Reading from the N-terminus, the 216-residue chain is GTP cyclohydrolase 1 (216 aa).

The interval 1-33 (MPQARGEGATPPTSLPNPSLKGVPLPDNPNNLE) is disordered. Positions 24 to 33 (PLPDNPNNLE) are enriched in low complexity. The Zn(2+) site is built by Cys102, His105, and Cys173.

It belongs to the GTP cyclohydrolase I family. As to quaternary structure, toroid-shaped homodecamer, composed of two pentamers of five dimers.

The enzyme catalyses GTP + H2O = 7,8-dihydroneopterin 3'-triphosphate + formate + H(+). It participates in cofactor biosynthesis; 7,8-dihydroneopterin triphosphate biosynthesis; 7,8-dihydroneopterin triphosphate from GTP: step 1/1. This Deinococcus radiodurans (strain ATCC 13939 / DSM 20539 / JCM 16871 / CCUG 27074 / LMG 4051 / NBRC 15346 / NCIMB 9279 / VKM B-1422 / R1) protein is GTP cyclohydrolase 1 (folE).